The chain runs to 68 residues: Negative regulatory protein YxlD (68 aa).

A run of 2 helical transmembrane segments spans residues 5 to 25 (EIII…FLFI) and 37 to 57 (WGIV…FFVI).

Its subcellular location is the cell membrane. Functionally, together with YxlE, is important for negative regulation of sigma Y activity, being the major negative regulator. This chain is Negative regulatory protein YxlD (yxlD), found in Bacillus subtilis (strain 168).